Reading from the N-terminus, the 434-residue chain is 23S rRNA (uracil(1939)-C(5))-methyltransferase RlmD (434 aa).

The TRAM domain maps to Arg10–Arg68. [4Fe-4S] cluster contacts are provided by Cys81, Cys87, Cys90, and Cys162. S-adenosyl-L-methionine contacts are provided by Gln265, Phe294, Asn299, Glu315, Asn342, and Asp363. Catalysis depends on Cys389, which acts as the Nucleophile.

Belongs to the class I-like SAM-binding methyltransferase superfamily. RNA M5U methyltransferase family. RlmD subfamily.

It carries out the reaction uridine(1939) in 23S rRNA + S-adenosyl-L-methionine = 5-methyluridine(1939) in 23S rRNA + S-adenosyl-L-homocysteine + H(+). Catalyzes the formation of 5-methyl-uridine at position 1939 (m5U1939) in 23S rRNA. This is 23S rRNA (uracil(1939)-C(5))-methyltransferase RlmD from Klebsiella pneumoniae (strain 342).